The primary structure comprises 356 residues: Leucoanthocyanidin dioxygenase (356 aa).

Residues tyrosine 142 and lysine 213 each contribute to the substrate site. The region spanning 208-307 (LLLQMKINYY…RISWAVFCEP (100 aa)) is the Fe2OG dioxygenase domain. 215–217 (NYY) is a 2-oxoglutarate binding site. Histidine 232 is a Fe cation binding site. Threonine 233 contacts substrate. Fe cation is bound by residues aspartate 234 and histidine 288. Residue 298–300 (RIS) coordinates 2-oxoglutarate. Substrate contacts are provided by glutamate 306 and lysine 341.

The protein belongs to the iron/ascorbate-dependent oxidoreductase family. L-ascorbate serves as cofactor. It depends on Fe(2+) as a cofactor. In terms of tissue distribution, expressed in young seedlings (at protein level).

It carries out the reaction a (2R,3S,4S)-leucoanthocyanidin + 2-oxoglutarate + O2 = a 4-H-anthocyanidin with a 3-hydroxy group + succinate + CO2 + 2 H2O. It catalyses the reaction (2R,3S,4S)-3,4-leucopelargonidin + 2-oxoglutarate + O2 = (4S)-2,3-dehydroleucopelargonidin + succinate + CO2 + H2O + H(+). The enzyme catalyses (2R,3S,4S)-leucocyanidin + 2-oxoglutarate + O2 = (4S)-2,3-dehydroleucocyanidin + succinate + CO2 + H2O + H(+). Its pathway is pigment biosynthesis; anthocyanin biosynthesis. In terms of biological role, involved in anthocyanin and protoanthocyanidin biosynthesis by catalyzing the oxidation of leucoanthocyanidins into anthocyanidins. Possesses low flavonol synthase activity in vitro towards dihydrokaempferol and dihydroquercetin producing kaempferol and quercitin, respectively. The polypeptide is Leucoanthocyanidin dioxygenase (LDOX) (Arabidopsis thaliana (Mouse-ear cress)).